Consider the following 475-residue polypeptide: Phenolic acid decarboxylase (475 aa).

Mn(2+) contacts are provided by N161, H183, and E225. Residues 161-166 and 182-183 each bind prenylated FMN; these read NVGIYR and MH. E274 acts as the Proton donor in catalysis.

The protein belongs to the UbiD family. YclC subfamily. Prenylated FMN is required as a cofactor. The cofactor is Mn(2+).

It carries out the reaction 4-hydroxybenzoate + H(+) = phenol + CO2. It catalyses the reaction vanillate + H(+) = guaiacol + CO2. Functionally, involved in the non-oxidative decarboxylation and detoxification of phenolic derivatives under both aerobic and anaerobic conditions. Phenolic acid decarboxylase that catalyzes the reversible decarboxylation of 4-hydroxybenzoate and vanillate. The sequence is that of Phenolic acid decarboxylase from Escherichia coli O157:H7.